Consider the following 930-residue polypeptide: MIIVKLTANRICCSLLQLRRSYEHFYIFVFLPEIPLFRFSHLKLFPKNLQIQRLVSAMMERTYGRRKPGIPRTLSDSLNDSVSQTEYLSSSSSPDIEPIDYSLLPFSSQESSSLWHSSSRSNFREDYPQNGGVVRRAKRVRNGAEAAAFTSTLLEAQEFGELMEHEDEVNFALDGLRKGHQLRIRRASLSSLLSICASQHQRRSLRAQGISQSIIDAILVLSLDDIPSNLAAATLFFALTADGQDEHFMESPKCIKFLIKLLKPVIVTSTEGKPRNIGFKLLSLLKDVDAARDPVKMDDPSSSDILSRVQELLVNCKEMRLNDSYITETTRPELSTKWVALLAMERACVSKISFDDTSGSVKKTGGNFKEKLRELGGLDAVLEVVMDCHAVMERWVEYDALSVQEKKDNLHKQSLMLLLKCLKIMENATFLSTDNQNHLLGFKKCLGSHDSRMSFTELTISVIKMLSGLHLRGGFSSPNTNNVNSHYSNGGNHDSVLEANRKVTNEVVTISSDTYSTVGSISTRNGSVSQRSQSIIHLDFSPTSMSGSQSSVSGNEPTTSKTRVGSTISGSFAGRLASLGSDIARTTLRTTQAGEPICKKFGEFAPPEESEDPFAFDLEDYKPSKWAVVSVNQKKSRAQKKKGCYKQSKDESLYQLFSSQEESSNHRLNSQEESSNRDCSTSLQPSHCTNDIDEECLCLLFDCLLTAVKVLMNLTNDNVVGCRQVGGCRGLESMAELIARHFPSFTRSQLFSEMEKTGSSHQKKDKYLTDQELDFLVAILGLLVNLVERDGVNRSRLASASVPITKPEELQESEQEMIPLLCSIFLTNQGSAETKEETTTFTLDDEEAVLEGEKEAEKMIVEAYSALLLAFLSTESRSIRNSIKDYLPKRNLAILVPVLERFVAFHMTLNMIPPETHKAVMGVIESCKSP.

Residues 540-566 form a disordered region; sequence FSPTSMSGSQSSVSGNEPTTSKTRVGS. Low complexity predominate over residues 541–553; sequence SPTSMSGSQSSVS. Positions 554 to 566 are enriched in polar residues; it reads GNEPTTSKTRVGS. In terms of domain architecture, WAPL spans 854–909; that stretch reads KEAEKMIVEAYSALLLAFLSTESRSIRNSIKDYLPKRNLAILVPVLERFVAFHMTL.

Belongs to the WAPL family. In terms of assembly, interacts with the cohesin complex throughout the cell cycle. In terms of tissue distribution, expressed in roots, leaves, buds and siliques.

The protein localises to the nucleus. It localises to the chromosome. In terms of biological role, regulator of sister chromatid cohesion in meiosis which negatively regulates cohesin association with chromatin, acting as an antagonist of CTF7. Cohesion ensures that chromosome partitioning is accurate in both meiotic and mitotic cells and plays an important role in DNA repair. Essential for the prophase removal of cohesin during meiosis thus determining the timely release of meiotic cohesion. Important for proper spindle attachment and assembly during meiosis. Helps to prevent abnormal centromere association during prophase I in meiocytes. Required for early embryonic patterning. Also involved in chromosome segregation during mitosis. The chain is Wings apart-like protein 1 from Arabidopsis thaliana (Mouse-ear cress).